A 273-amino-acid chain; its full sequence is 4-hydroxy-tetrahydrodipicolinate reductase (273 aa).

NAD(+) contacts are provided by residues glycine 11–methionine 16 and glycine 106–threonine 108. Histidine 162 functions as the Proton donor/acceptor in the catalytic mechanism. Histidine 163 lines the (S)-2,3,4,5-tetrahydrodipicolinate pocket. Residue lysine 166 is the Proton donor of the active site. Residue glycine 172–threonine 173 coordinates (S)-2,3,4,5-tetrahydrodipicolinate.

It belongs to the DapB family.

The protein localises to the cytoplasm. The catalysed reaction is (S)-2,3,4,5-tetrahydrodipicolinate + NAD(+) + H2O = (2S,4S)-4-hydroxy-2,3,4,5-tetrahydrodipicolinate + NADH + H(+). It catalyses the reaction (S)-2,3,4,5-tetrahydrodipicolinate + NADP(+) + H2O = (2S,4S)-4-hydroxy-2,3,4,5-tetrahydrodipicolinate + NADPH + H(+). It functions in the pathway amino-acid biosynthesis; L-lysine biosynthesis via DAP pathway; (S)-tetrahydrodipicolinate from L-aspartate: step 4/4. Functionally, catalyzes the conversion of 4-hydroxy-tetrahydrodipicolinate (HTPA) to tetrahydrodipicolinate. The protein is 4-hydroxy-tetrahydrodipicolinate reductase of Synechococcus sp. (strain ATCC 27144 / PCC 6301 / SAUG 1402/1) (Anacystis nidulans).